A 265-amino-acid polypeptide reads, in one-letter code: MRKAGHCPALFLLLRVPGRPHSFDLARAASDQLGRLGNARSAGAKRDDAVVHAGVTFAAGVAAGGLRQLDTLTLTLAPILVVVAGHLQGELQKHVLDGFQNDFRHSVRLGGQLRQVHHARHGQLGPFGPDRRNQALGLGQRQAADAVDLLRNDDFTRLQVRDHAQQLGPVGACAGRLLAVDAGDVVPGGPRGRYKALLAFKILLVRTGAQVDAGDLQPSSLRLLLSRRHFHGSTACGSDQRPTRLPRASCSSRSISGSAARPWKR.

The interval 233 to 265 (STACGSDQRPTRLPRASCSSRSISGSAARPWKR) is disordered. Residues 247–265 (RASCSSRSISGSAARPWKR) show a composition bias toward low complexity.

This is an uncharacterized protein from Escherichia coli.